The following is a 491-amino-acid chain: Cobyric acid synthase (491 aa).

A GATase cobBQ-type domain is found at 258–445 (ALKVAVPVLG…MHGLFGADAF (188 aa)). Residue cysteine 340 is the Nucleophile of the active site. The active site involves histidine 437.

The protein belongs to the CobB/CobQ family. CobQ subfamily.

It functions in the pathway cofactor biosynthesis; adenosylcobalamin biosynthesis. Functionally, catalyzes amidations at positions B, D, E, and G on adenosylcobyrinic A,C-diamide. NH(2) groups are provided by glutamine, and one molecule of ATP is hydrogenolyzed for each amidation. The chain is Cobyric acid synthase from Mesorhizobium japonicum (strain LMG 29417 / CECT 9101 / MAFF 303099) (Mesorhizobium loti (strain MAFF 303099)).